We begin with the raw amino-acid sequence, 175 residues long: 19.0 kDa class II heat shock protein (175 aa).

Residues 42 to 165 form the sHSP domain; that stretch reads DRRAMANTPM…KPRVVEVKVA (124 aa). A disordered region spans residues 145-175; the sequence is TVDKKPPPEPKKPRVVEVKVAGAGEPKGKGK. The segment covering 146-161 has biased composition (basic and acidic residues); that stretch reads VDKKPPPEPKKPRVVE.

The protein belongs to the small heat shock protein (HSP20) family. May form oligomeric structures.

It is found in the cytoplasm. In Oryza sativa subsp. japonica (Rice), this protein is 19.0 kDa class II heat shock protein (HSP19.0).